The primary structure comprises 108 residues: Transcription factor AmrZ (108 aa).

Functionally, functions both as a transcriptional activator and a repressor of multiple genes encoding virulence factors as well as genes involved in environmental adaptation. Represses genes involved in iron homeostasis. Modulates intracellular levels of c-di-GMP which in turn regulates swimming motility and biofilm formation. The polypeptide is Transcription factor AmrZ (Pseudomonas ogarae (strain DSM 112162 / CECT 30235 / F113)).